The sequence spans 345 residues: NADH-quinone oxidoreductase subunit 8 (345 aa).

8 consecutive transmembrane segments (helical) span residues 15-35, 82-102, 115-135, 161-181, 190-210, 240-262, 278-298, and 309-329; these read MLLQ…FMVY, FVYF…FVVI, VGIL…IMGG, LGLI…TAIV, LLNW…VSAL, YLLF…SLLF, WWMV…KAIV, and IGWK…AILA.

It belongs to the complex I subunit 1 family. As to quaternary structure, NDH-1 is composed of at least 14 different subunits, Nqo1 to Nqo14. The complex has a L-shaped structure, with the hydrophobic arm (subunits Nqo7, Nqo8, Nqo10 to Nqo14) embedded in the inner membrane and the hydrophilic peripheral arm (subunits Nqo1 to Nqo6, Nqo9) protruding into the bacterial cytoplasm. The hydrophilic domain contains all the redox centers.

It is found in the cell inner membrane. The catalysed reaction is a quinone + NADH + 5 H(+)(in) = a quinol + NAD(+) + 4 H(+)(out). Its function is as follows. NDH-1 shuttles electrons from NADH, via FMN and iron-sulfur (Fe-S) centers, to quinones in the respiratory chain. The immediate electron acceptor for the enzyme in this species is believed to be ubiquinone. Couples the redox reaction to proton translocation (for every two electrons transferred, four hydrogen ions are translocated across the cytoplasmic membrane), and thus conserves the redox energy in a proton gradient. The chain is NADH-quinone oxidoreductase subunit 8 from Paracoccus denitrificans.